Reading from the N-terminus, the 298-residue chain is Pantothenate synthetase (298 aa).

ATP is bound at residue 30-37 (MGNLHEGH). His37 serves as the catalytic Proton donor. (R)-pantoate is bound at residue Gln61. Residue Gln61 coordinates beta-alanine. 149 to 152 (GEKD) contacts ATP. Residue Gln155 coordinates (R)-pantoate. Residues Val178 and 186–189 (MSSR) contribute to the ATP site.

The protein belongs to the pantothenate synthetase family. Homodimer.

The protein resides in the cytoplasm. The catalysed reaction is (R)-pantoate + beta-alanine + ATP = (R)-pantothenate + AMP + diphosphate + H(+). The protein operates within cofactor biosynthesis; (R)-pantothenate biosynthesis; (R)-pantothenate from (R)-pantoate and beta-alanine: step 1/1. Functionally, catalyzes the condensation of pantoate with beta-alanine in an ATP-dependent reaction via a pantoyl-adenylate intermediate. The sequence is that of Pantothenate synthetase from Aliivibrio salmonicida (strain LFI1238) (Vibrio salmonicida (strain LFI1238)).